The sequence spans 377 residues: Succinyl-diaminopimelate desuccinylase (377 aa).

His-66 contributes to the Zn(2+) binding site. The active site involves Asp-68. Asp-99 is a Zn(2+) binding site. The active-site Proton acceptor is the Glu-133. Zn(2+) is bound by residues Glu-134, Glu-162, and His-348.

It belongs to the peptidase M20A family. DapE subfamily. Homodimer. Zn(2+) is required as a cofactor. Co(2+) serves as cofactor.

The catalysed reaction is N-succinyl-(2S,6S)-2,6-diaminopimelate + H2O = (2S,6S)-2,6-diaminopimelate + succinate. The protein operates within amino-acid biosynthesis; L-lysine biosynthesis via DAP pathway; LL-2,6-diaminopimelate from (S)-tetrahydrodipicolinate (succinylase route): step 3/3. Functionally, catalyzes the hydrolysis of N-succinyl-L,L-diaminopimelic acid (SDAP), forming succinate and LL-2,6-diaminopimelate (DAP), an intermediate involved in the bacterial biosynthesis of lysine and meso-diaminopimelic acid, an essential component of bacterial cell walls. The protein is Succinyl-diaminopimelate desuccinylase of Marinomonas sp. (strain MWYL1).